Reading from the N-terminus, the 321-residue chain is Cytochrome c biogenesis protein CcsA (321 aa).

The next 8 helical transmembrane spans lie at 12–32 (HISFSIISIVIIIHLMNLLVY), 45–62 (MIATFSSITGFLVTRWIS), 71–91 (LYESLIFLSWSLSIIHIILYI), 98–117 (LNAITAPSAIFTQGFATSGL), 143–163 (MLLSYAALLCGSLLSVALIVI), 227–247 (VISLGFTFLTIGILSGAVWAN), 260–277 (ETWAFITWTIFAIYLHTR), and 292–312 (VASIGFLLIWICYFGINLLGI).

This sequence belongs to the CcmF/CycK/Ccl1/NrfE/CcsA family. May interact with Ccs1.

It is found in the plastid. Its subcellular location is the chloroplast thylakoid membrane. In terms of biological role, required during biogenesis of c-type cytochromes (cytochrome c6 and cytochrome f) at the step of heme attachment. The protein is Cytochrome c biogenesis protein CcsA of Phalaenopsis aphrodite subsp. formosana (Moth orchid).